Consider the following 533-residue polypeptide: UDP-glucuronosyltransferase 1-2 (533 aa).

A signal peptide spans 1–27 (MDTGLCVPLRGISGLLLLLCALPWAEG). N-linked (GlcNAc...) asparagine glycans are attached at residues N141, N295, and N433. A helical transmembrane segment spans residues 491–511 (VIGFLLAIVLTVVFIVFKCCA).

This sequence belongs to the UDP-glycosyltransferase family. As to expression, expressed in kidney.

The protein resides in the microsome. The protein localises to the endoplasmic reticulum membrane. It carries out the reaction glucuronate acceptor + UDP-alpha-D-glucuronate = acceptor beta-D-glucuronoside + UDP + H(+). Functionally, UDPGT is of major importance in the conjugation and subsequent elimination of potentially toxic xenobiotics and endogenous compounds. The chain is UDP-glucuronosyltransferase 1-2 (Ugt1a2) from Mus musculus (Mouse).